Here is an 889-residue protein sequence, read N- to C-terminus: Oxysterol-binding protein-related protein 8 (889 aa).

Residue methionine 1 is modified to N-acetylmethionine. The tract at residues 1 to 129 (MEGGLADGEP…SLKVQKKNYR (129 aa)) is disordered. Serine 14 bears the Phosphoserine mark. Composition is skewed to polar residues over residues 28–46 (VVANSDESQLLTPGKMSQR) and 62–71 (PSLSPASPHS). 2 positions are modified to phosphoserine: serine 65 and serine 68. 3 stretches are compositionally biased toward basic and acidic residues: residues 73 to 88 (GFERGKEDISQNKDES), 95 to 109 (SKSESKLYNGSEKDS), and 116 to 129 (TKKESLKVQKKNYR). One can recognise a PH domain in the interval 148–265 (VIVMADWLKI…WMDALELALK (118 aa)). A phosphoserine mark is found at serine 314, serine 328, and serine 342. Residues 322–336 (KDQDMYSDKSDKEND) show a composition bias toward basic and acidic residues. A disordered region spans residues 322-399 (KDQDMYSDKS…AGEASQTETV (78 aa)). Basic and acidic residues predominate over residues 346–363 (VMGKSEESDTDTSERQDD). Residues 420–425 (LSKVVL), 482–485 (KPYN), and 514–515 (HH) each bind a 1,2-diacyl-sn-glycero-3-phospho-(1D-myo-inositol 4-phosphate). Residues 420 to 425 (LSKVVL) and asparagine 485 contribute to the a 1,2-diacyl-sn-glycero-3-phospho-L-serine site. A 1,2-diacyl-sn-glycero-3-phospho-L-serine is bound at residue serine 540. 3 residues coordinate a 1,2-diacyl-sn-glycero-3-phospho-(1D-myo-inositol 4-phosphate): lysine 706, glutamate 710, and arginine 714. Residues 771–823 (KHRTPMVSVPKMKHKPTRQQKKVAKGYSSPEPDIQDSSGSEAQSVKPSTRRKK) are disordered. Residues 781 to 794 (KMKHKPTRQQKKVA) show a composition bias toward basic residues. Over residues 805 to 817 (QDSSGSEAQSVKP) the composition is skewed to polar residues. Phosphoserine occurs at positions 807, 808, 810, and 814. Residues 871 to 888 (YFIIFLLILLQVIINFMF) traverse the membrane as a helical segment.

This sequence belongs to the OSBP family. Interacts with SPAG5. Interacts with NUP62. As to expression, widely expressed. Expressed at higher level in macrophages.

The protein localises to the endoplasmic reticulum membrane. It is found in the nucleus membrane. Functionally, lipid transporter involved in lipid countertransport between the endoplasmic reticulum and the plasma membrane: specifically exchanges phosphatidylserine with phosphatidylinositol 4-phosphate (PI4P), delivering phosphatidylserine to the plasma membrane in exchange for PI4P, which is degraded by the SAC1/SACM1L phosphatase in the endoplasmic reticulum. Binds phosphatidylserine and PI4P in a mutually exclusive manner. Binds oxysterol, 25-hydroxycholesterol and cholesterol. In Homo sapiens (Human), this protein is Oxysterol-binding protein-related protein 8 (OSBPL8).